The following is a 312-amino-acid chain: Pimeloyl-[acyl-carrier protein] methyl ester esterase (312 aa).

In terms of domain architecture, AB hydrolase-1 spans 17–241 (VYLIHGWGAN…KAAHAPFLSH (225 aa)). Substrate is bound by residues W23, 83 to 84 (SL), and 145 to 149 (FLQLQ). S83 acts as the Nucleophile in catalysis. Catalysis depends on residues D207 and H235. H235 is a substrate binding site.

It belongs to the AB hydrolase superfamily. Carboxylesterase BioH family. In terms of assembly, monomer.

It localises to the cytoplasm. It carries out the reaction 6-carboxyhexanoyl-[ACP] methyl ester + H2O = 6-carboxyhexanoyl-[ACP] + methanol + H(+). Its pathway is cofactor biosynthesis; biotin biosynthesis. The physiological role of BioH is to remove the methyl group introduced by BioC when the pimeloyl moiety is complete. It allows to synthesize pimeloyl-ACP via the fatty acid synthetic pathway through the hydrolysis of the ester bonds of pimeloyl-ACP esters. This is Pimeloyl-[acyl-carrier protein] methyl ester esterase from Neisseria meningitidis serogroup A / serotype 4A (strain DSM 15465 / Z2491).